Reading from the N-terminus, the 336-residue chain is Vacuolar protein sorting-associated protein 26B (336 aa).

3 positions are modified to phosphoserine: serine 302, serine 304, and serine 319.

Belongs to the VPS26 family. Component of the heterotrimeric retromer cargo-selective complex (CSC), also described as vacuolar protein sorting subcomplex (VPS), formed by VPS26 (VPS26A or VPS26B), VPS29 and VPS35. The CSC has a highly elongated structure with VPS26 and VPS29 binding independently at opposite distal ends of VPS35 as central platform. The CSC is believed to associate with variable sorting nexins to form functionally distinct retromer complex variants. The originally described SNX-BAR retromer is a pentamer containing the CSC and a heterodimeric membrane-deforming subcomplex formed between SNX1 or SNX2 and SNX5 or SNX6 (also called SNX-BAR subcomplex); the respective CSC and SNX-BAR subcomplexes associate with low affinity. The CSC associates with SNX3 to form a SNX3-retromer complex. The CSC associates with SNX27, the WASH complex and the SNX-BAR subcomplex to form the SNX27-retromer complex. Interacts with VPS29, VPS35, TBC1D5, GOLPH3, SNX27.

Its subcellular location is the cytoplasm. The protein localises to the membrane. It is found in the early endosome. The protein resides in the late endosome. In terms of biological role, acts as a component of the retromer cargo-selective complex (CSC). The CSC is believed to be the core functional component of retromer or respective retromer complex variants acting to prevent missorting of selected transmembrane cargo proteins into the lysosomal degradation pathway. The recruitment of the CSC to the endosomal membrane involves RAB7A and SNX3. The SNX-BAR retromer mediates retrograde transport of cargo proteins from endosomes to the trans-Golgi network (TGN) and is involved in endosome-to-plasma membrane transport for cargo protein recycling. The SNX3-retromer mediates the retrograde transport of WLS distinct from the SNX-BAR retromer pathway. The SNX27-retromer is believed to be involved in endosome-to-plasma membrane trafficking and recycling of a broad spectrum of cargo proteins. The CSC seems to act as recruitment hub for other proteins, such as the WASH complex and TBC1D5. May be involved in retrograde transport of SORT1 but not of IGF2R. Acts redundantly with VSP26A in SNX-27 mediated endocytic recycling of SLC2A1/GLUT1. The polypeptide is Vacuolar protein sorting-associated protein 26B (VPS26B) (Pongo abelii (Sumatran orangutan)).